A 1004-amino-acid chain; its full sequence is Caspase recruitment domain-containing protein 14 (1004 aa).

Positions 15-107 constitute a CARD domain; sequence DEETLWEMME…DVYTLVTGLQ (93 aa). The stretch at 128-409 forms a coiled coil; it reads LAGAIGSLQE…RTQLRQLQAE (282 aa). Residues 409–568 form a maintains the protein in an inactive state region; the sequence is EPPGVLKQEA…RRPARRILSQ (160 aa). Ser544 is subject to Phosphoserine. In terms of domain architecture, PDZ spans 568–658; sequence QVTMLAFQGD…FCCLSVKVNT (91 aa). Residues 807 to 990 form the Guanylate kinase-like domain; it reads AESCLTLVPY…LLSCVRQAIA (184 aa).

Interacts (via CARD domain) with BCL10 (via CARD domain). Forms a complex with MALT1 and BCL10; resulting in the formation of a CBM (CARD14-BLC10-MALT1) complex. Interacts with TRAF2, TRAF3 and TRAF6. As to expression, isoform 1 is detected in placenta and epidermal keratinocytes. Isoform 2 is detected in leukocytes and fetal brain.

The protein resides in the cytoplasm. Its function is as follows. Acts as a scaffolding protein that can activate the inflammatory transcription factor NF-kappa-B and p38/JNK MAP kinase signaling pathways. Forms a signaling complex with BCL10 and MALT1, and activates MALT1 proteolytic activity and inflammatory gene expression. MALT1 is indispensable for CARD14-induced activation of NF-kappa-B and p38/JNK MAP kinases. May play a role in signaling mediated by TRAF2, TRAF3 and TRAF6 and protects cells against apoptosis. In terms of biological role, not able to activate the inflammatory transcription factor NF-kappa-B and may function as a dominant negative regulator. This is Caspase recruitment domain-containing protein 14 (CARD14) from Homo sapiens (Human).